The following is a 394-amino-acid chain: Metal tolerance protein 11 (394 aa).

Over 1–103 the chain is Cytoplasmic; sequence MVEPASPDSD…EQDNLAKSET (103 aa). Residues 104 to 124 traverse the membrane as a helical segment; sequence LAIRISNIANMLLFAAKVYAS. Topologically, residues 125–130 are vacuolar; that stretch reads VTSGSL. The chain crosses the membrane as a helical span at residues 131 to 151; that stretch reads AIIASTLDSLLDLLSGFILWF. At 152–172 the chain is on the cytoplasmic side; the sequence is TAFSMQTPNPYQYPIGKKRMQ. Residues 173–193 form a helical membrane-spanning segment; sequence PLGILVFASVMATLGLQIILE. Residues 194–212 lie on the Vacuolar side of the membrane; it reads SLRTMLSSHKEFNLTKEQE. The helical transmembrane segment at 213 to 233 threads the bilayer; sequence SWVVGIMLSVTLVKLLLVLYC. Topologically, residues 234-251 are cytoplasmic; it reads RSFTNEIVKAYAQDHFFD. Residues 252–272 traverse the membrane as a helical segment; the sequence is VITNIIGLIAVILANYIDYWI. Residue D273 is a topological domain, vacuolar. A helical membrane pass occupies residues 274 to 294; it reads PVGAIILALYTIRTWSMTVLE. The Cytoplasmic segment spans residues 295–394; it reads NVNSLVGKSA…HKPEHARSHC (100 aa).

Belongs to the cation diffusion facilitator (CDF) transporter (TC 2.A.4) family. SLC30A subfamily. Widely expressed.

The protein resides in the prevacuolar compartment membrane. Its subcellular location is the golgi apparatus membrane. Cation/proton antiporter involved in endogenous manganese tolerance probably through vesicular trafficking and exocytosis. This Arabidopsis thaliana (Mouse-ear cress) protein is Metal tolerance protein 11 (MTP11).